Reading from the N-terminus, the 288-residue chain is Zinc finger protein ZAT9 (288 aa).

The segment at 4–26 (YKCRVCFKSFVNGKALGGHMRSH) adopts a C2H2-type 1 zinc-finger fold. 3 disordered regions span residues 20–82 (GGHM…LTRK), 101–123 (SQLGYKPESDQEPPHSSASDTTT), and 189–210 (GGHRASHKKNRVSNNKTEQRSE). Over residues 37-52 (PSQLSYETESDVSSSD) the composition is skewed to polar residues. C2H2-type zinc fingers lie at residues 173–195 (YKCETCGKVFKSYQALGGHRASH) and 224–246 (HECPICLRVFASGQALGGHKRSH).

The protein localises to the nucleus. Probable transcription factor that may be involved in stress responses. This Arabidopsis thaliana (Mouse-ear cress) protein is Zinc finger protein ZAT9 (ZAT9).